The following is a 309-amino-acid chain: Probable lipid kinase YegS-like (309 aa).

One can recognise a DAGKc domain in the interval 1-134; sequence MAPSHWRLIL…VDLLRIDADH (134 aa). ATP-binding positions include Thr39, 65–71, and Thr96; that span reads GDGTLSE. Leu219, Asp222, and Leu224 together coordinate Mg(2+). Glu280 acts as the Proton acceptor in catalysis.

This sequence belongs to the diacylglycerol/lipid kinase family. YegS lipid kinase subfamily. Requires Mg(2+) as cofactor. Ca(2+) serves as cofactor.

It is found in the cytoplasm. In terms of biological role, probably phosphorylates lipids; the in vivo substrate is unknown. This Xanthomonas axonopodis pv. citri (strain 306) protein is Probable lipid kinase YegS-like.